We begin with the raw amino-acid sequence, 285 residues long: Bifunctional protein FolD (285 aa).

Residues 165 to 167 and S190 contribute to the NADP(+) site; that span reads GRS.

This sequence belongs to the tetrahydrofolate dehydrogenase/cyclohydrolase family. In terms of assembly, homodimer.

The catalysed reaction is (6R)-5,10-methylene-5,6,7,8-tetrahydrofolate + NADP(+) = (6R)-5,10-methenyltetrahydrofolate + NADPH. It catalyses the reaction (6R)-5,10-methenyltetrahydrofolate + H2O = (6R)-10-formyltetrahydrofolate + H(+). It functions in the pathway one-carbon metabolism; tetrahydrofolate interconversion. Catalyzes the oxidation of 5,10-methylenetetrahydrofolate to 5,10-methenyltetrahydrofolate and then the hydrolysis of 5,10-methenyltetrahydrofolate to 10-formyltetrahydrofolate. This is Bifunctional protein FolD from Burkholderia ambifaria (strain ATCC BAA-244 / DSM 16087 / CCUG 44356 / LMG 19182 / AMMD) (Burkholderia cepacia (strain AMMD)).